Reading from the N-terminus, the 206-residue chain is Large ribosomal subunit protein uL4 (206 aa).

This sequence belongs to the universal ribosomal protein uL4 family. As to quaternary structure, part of the 50S ribosomal subunit.

One of the primary rRNA binding proteins, this protein initially binds near the 5'-end of the 23S rRNA. It is important during the early stages of 50S assembly. It makes multiple contacts with different domains of the 23S rRNA in the assembled 50S subunit and ribosome. In terms of biological role, forms part of the polypeptide exit tunnel. The polypeptide is Large ribosomal subunit protein uL4 (Methylocella silvestris (strain DSM 15510 / CIP 108128 / LMG 27833 / NCIMB 13906 / BL2)).